Consider the following 860-residue polypeptide: MGTTASAAPQATLHERLHSDSMTDSRRSIQTLGIHNNKAKSIITNKVAPVVITYNCRQEFQIHDDVLRTNYKVGRISDNMPEHHLVQGSFFMVQDVFSKADVLNTTASYGAPNFRQSGGGFPLYGMGQTSLGGFKRVLESLQTRGHQEVIFFCLREEPVVFLHLQEDFLPYTPRRKENLHENLQHLQRGASSEDLELTIRKELHDFAKLNDNMFYVYNDIEHLKGEPQKICICSEEDIHITEEVYRRPRFTMPAYRYYRLPLPMEGAPMEEQFDAFVKVLRENPSLSLNRDASRLLPALLFSCQVGVGRTNLGLILGTLVMMHLTRTTAEKTTPAEEEVKDEHKIQFRVIESLIGKLPKGQEVMEEVNRAIDLCSEMHDIRESIYENKQKLEGIGEDYQTQGSSTKDYFLHGALQSLERYFYLIVFNAYLHEQYPLAFACSFSQWLCSNAWIYRLLSCMNQSELRAPADLVTKGARVLVADEYLAPDVLSTIKEMKVANFRRVPKMSIYGMAQPTSEAASVVLAYLCDEKRKHSSVLWVNLQDELLLEANNQIFSPREPTRVEQCIRVCSAQPEDIQSLEASLKAQLLASQQWLEVTLEQEKQMKMIKSCSTVQEIFNQLKSSHHALQYRRIPFPECSAPSEEGFDQLLDVMKATLAEDSLSAFVFNCSNGKARTTTAMVIATLTLWHFNGFPEFCEDEIVSVPDAKYTKGEFEVVMKLVRLLPDGQRMKREVDAALDSVSETMTPLHYHLREIIICTYRQIRSCKSDAELLALQALLYLERYIYLILYNSYLHLEKRDSWRRPFSVWMQQVAAPAGVYELLNQLGFSEFEDLRDSTLCRLRRRWLQQNRHGLPFRGELI.

The segment at 1–24 is disordered; sequence MGTTASAAPQATLHERLHSDSMTD. G2 carries the N-myristoyl glycine lipid modification. Over residues 13 to 24 the composition is skewed to basic and acidic residues; it reads LHERLHSDSMTD.

The protein belongs to the paladin family.

The protein resides in the cytoplasm. It localises to the cytosol. The polypeptide is Paladin (pald1) (Danio rerio (Zebrafish)).